Here is a 286-residue protein sequence, read N- to C-terminus: ATP synthase gamma chain (286 aa).

The protein belongs to the ATPase gamma chain family. F-type ATPases have 2 components, CF(1) - the catalytic core - and CF(0) - the membrane proton channel. CF(1) has five subunits: alpha(3), beta(3), gamma(1), delta(1), epsilon(1). CF(0) has three main subunits: a, b and c.

Its subcellular location is the cell inner membrane. Produces ATP from ADP in the presence of a proton gradient across the membrane. The gamma chain is believed to be important in regulating ATPase activity and the flow of protons through the CF(0) complex. The sequence is that of ATP synthase gamma chain from Shewanella piezotolerans (strain WP3 / JCM 13877).